The primary structure comprises 230 residues: 5'-methylthioadenosine/S-adenosylhomocysteine nucleosidase (230 aa).

The active-site Proton acceptor is the Glu12. Residues Gly78, Ile152, and 173–174 (ME) each bind substrate. Asp197 (proton donor) is an active-site residue.

Belongs to the PNP/UDP phosphorylase family. MtnN subfamily.

It carries out the reaction S-adenosyl-L-homocysteine + H2O = S-(5-deoxy-D-ribos-5-yl)-L-homocysteine + adenine. It catalyses the reaction S-methyl-5'-thioadenosine + H2O = 5-(methylsulfanyl)-D-ribose + adenine. The enzyme catalyses 5'-deoxyadenosine + H2O = 5-deoxy-D-ribose + adenine. It functions in the pathway amino-acid biosynthesis; L-methionine biosynthesis via salvage pathway; S-methyl-5-thio-alpha-D-ribose 1-phosphate from S-methyl-5'-thioadenosine (hydrolase route): step 1/2. Catalyzes the irreversible cleavage of the glycosidic bond in both 5'-methylthioadenosine (MTA) and S-adenosylhomocysteine (SAH/AdoHcy) to adenine and the corresponding thioribose, 5'-methylthioribose and S-ribosylhomocysteine, respectively. Also cleaves 5'-deoxyadenosine, a toxic by-product of radical S-adenosylmethionine (SAM) enzymes, into 5-deoxyribose and adenine. This Actinobacillus succinogenes (strain ATCC 55618 / DSM 22257 / CCUG 43843 / 130Z) protein is 5'-methylthioadenosine/S-adenosylhomocysteine nucleosidase.